The following is a 109-amino-acid chain: Ig kappa chain V region 3374 (109 aa).

A framework-1 region spans residues 1–24 (ADIVMTQTPASVSAAVGGTVTINC). Residues 25–35 (QASQNIDSWLA) are complementarity-determining-1. Residues 36 to 50 (WYQQKPGQPPKVLIY) form a framework-2 region. Residues 51-57 (RTSTLAS) form a complementarity-determining-2 region. The tract at residues 58-89 (GVPSRFKGSRSGTEFTLTISDLECADAATYYC) is framework-3. A complementarity-determining-3 region spans residues 90 to 98 (QSYYSISSA). The tract at residues 99–108 (FGGGTEVVVK) is framework-4.

This chain is Ig kappa chain V region 3374, found in Oryctolagus cuniculus (Rabbit).